The chain runs to 899 residues: Bifunctional uridylyltransferase/uridylyl-removing enzyme (899 aa).

The uridylyltransferase stretch occupies residues 1-347 (MFISDPTDSL…PESERPEKSV (347 aa)). A uridylyl-removing region spans residues 348 to 718 (LNARFNRVGD…EHRELALDAV (371 aa)). Residues 465-581 (VDAHILLLIR…TKFANLVGNV (117 aa)) form the HD domain. ACT domains lie at 719-804 (QIFI…RLPR) and 827-899 (VMSL…TPSC).

This sequence belongs to the GlnD family. Mg(2+) is required as a cofactor.

The catalysed reaction is [protein-PII]-L-tyrosine + UTP = [protein-PII]-uridylyl-L-tyrosine + diphosphate. It carries out the reaction [protein-PII]-uridylyl-L-tyrosine + H2O = [protein-PII]-L-tyrosine + UMP + H(+). Its activity is regulated as follows. Uridylyltransferase (UTase) activity is inhibited by glutamine, while glutamine activates uridylyl-removing (UR) activity. Modifies, by uridylylation and deuridylylation, the PII regulatory proteins (GlnB and homologs), in response to the nitrogen status of the cell that GlnD senses through the glutamine level. Under low glutamine levels, catalyzes the conversion of the PII proteins and UTP to PII-UMP and PPi, while under higher glutamine levels, GlnD hydrolyzes PII-UMP to PII and UMP (deuridylylation). Thus, controls uridylylation state and activity of the PII proteins, and plays an important role in the regulation of nitrogen assimilation and metabolism. This Psychrobacter sp. (strain PRwf-1) protein is Bifunctional uridylyltransferase/uridylyl-removing enzyme.